The sequence spans 312 residues: Glycerol 2-dehydrogenase (NADP(+)) (312 aa).

Tyr-56 functions as the Proton donor in the catalytic mechanism. Substrate is bound at residue His-112. 220–274 (SPLGSTDAPLLKEPVILEIAKKNNVQPGHVVISWHVQRGYVVLPKSVNPDRIKTN) serves as a coordination point for NADP(+). The residue at position 306 (Ser-306) is a Phosphoserine.

Belongs to the aldo/keto reductase family.

It localises to the cytoplasm. It carries out the reaction glycerol + NADP(+) = dihydroxyacetone + NADPH + H(+). Glycerol dehydrogenase involved in glycerol catabolism under microaerobic conditions. Has mRNA binding activity. This chain is Glycerol 2-dehydrogenase (NADP(+)) (GCY1), found in Saccharomyces cerevisiae (strain ATCC 204508 / S288c) (Baker's yeast).